Here is a 185-residue protein sequence, read N- to C-terminus: TRAF-interacting protein with FHA domain-containing protein A (185 aa).

Threonine 9 carries the post-translational modification Phosphothreonine. The 57-residue stretch at 48–104 (VKFGRNSNMCQYTFQDKQVSRVQFALQPFKQFNSSVLSFEIKNMSKKTSLMVDNQEL) folds into the FHA domain.

The protein belongs to the TIFA family. Homooligomer; homooligomerizes following phosphorylation at Thr-9. Interacts with IRAK1, TRAF2 and TRAF6. Interacts with TIFAB; binding to TIFAB inhibits TRAF6 activation, possibly by inducing a conformational change in TIFA. Interacts with ZCCHC11; binding to ZCCHC11 suppresses the TRAF6-dependent activation of NF-kappa-B. Phosphorylated at Thr-9 following detection of ADP-D-glycero-beta-D-manno-heptose (ADP-Heptose) by ALPK1. Phosphorylation at Thr-9 by ALPK1 leads to the formation of an intermolecular binding between the FHA domain and phosphorylated Thr-9, promoting TIFA oligomerization and TIFA-mediated NF-kappa-B activation.

Its subcellular location is the cytoplasm. Its function is as follows. Adapter molecule that plays a key role in the activation of pro-inflammatory NF-kappa-B signaling following detection of bacterial pathogen-associated molecular pattern metabolites (PAMPs). Promotes activation of an innate immune response by inducing the oligomerization and polyubiquitination of TRAF6, which leads to the activation of TAK1 and IKK through a proteasome-independent mechanism. TIFA-dependent innate immune response is triggered by ADP-D-glycero-beta-D-manno-heptose (ADP-Heptose), a potent PAMP present in all Gram-negative and some Gram-positive bacteria: ADP-Heptose is recognized by ALPK1, which phosphorylates TIFA at Thr-9, leading to TIFA homooligomerization and subsequent activation of pro-inflammatory NF-kappa-B signaling. The sequence is that of TRAF-interacting protein with FHA domain-containing protein A from Rattus norvegicus (Rat).